The following is a 388-amino-acid chain: Chaperone protein DnaJ 1 (388 aa).

Residues 10 to 74 (DFYKELGVSS…VKRKEYDETR (65 aa)) form the J domain. The segment at 159–237 (GVAMPLRLTS…CKGTGVTTRT (79 aa)) adopts a CR-type zinc-finger fold. Zn(2+) is bound by residues Cys-172, Cys-175, Cys-189, Cys-192, Cys-211, Cys-214, Cys-225, and Cys-228. CXXCXGXG motif repeat units lie at residues 172 to 179 (CTNCHGSG), 189 to 196 (CSTCNGSG), 211 to 218 (CTECRGSG), and 225 to 232 (CEECKGTG).

It belongs to the DnaJ family. In terms of assembly, homodimer. Zn(2+) is required as a cofactor.

It is found in the cytoplasm. Participates actively in the response to hyperosmotic and heat shock by preventing the aggregation of stress-denatured proteins and by disaggregating proteins, also in an autonomous, DnaK-independent fashion. Unfolded proteins bind initially to DnaJ; upon interaction with the DnaJ-bound protein, DnaK hydrolyzes its bound ATP, resulting in the formation of a stable complex. GrpE releases ADP from DnaK; ATP binding to DnaK triggers the release of the substrate protein, thus completing the reaction cycle. Several rounds of ATP-dependent interactions between DnaJ, DnaK and GrpE are required for fully efficient folding. Also involved, together with DnaK and GrpE, in the DNA replication of plasmids through activation of initiation proteins. The protein is Chaperone protein DnaJ 1 of Mycobacterium leprae (strain TN).